Here is a 1368-residue protein sequence, read N- to C-terminus: MAYSFTEKKRIRKSFAKRATVHQVPFLLATQIESYTQFLQAETPAARRKTEGLQAAFNAIFPIASHNGLARMEFVSYHLSNPPFDVKECQQRGLTFHSALRAKVRLIINDRENPGKVKEVKEQEVYMGEIPLMTSTGSFVINGTERVIVSQLHRSPGVFFEHDKGKTHSSGKLLFSARIIPYRGSWLDFEFDPKDILYFRVDRRRKMPVTILLKSIGLTPEQILAHFFVFDNFTLQSEGAQLEFVPERLRGEVARFDIADKNGRVVVEKDKRINAKHIRDLDSAGTKLISVPEDYLLGRVLAKNIIDPDTGEVIANANDELTETVLENLREAGVKQIQTLYTNDLDQGPYMSQTLRVDETADQTAARIAIYRMMRPGEPPTEEAVEALFQRLFYSEESYDLSRVGRMKVNSRLSRPSGEGSMVLQDEDILETIKILVNLRNGKGEVDDIDHLGNRRVRCVGELAENQFRAGLSRVERAVKERLGQAETENLMPHDLINSKPISSAIREFFGSSQLSQFMDQTNPLSEITHKRRVSALGPGGLTRERAGFEVRDVHPTHYGRVCPIETPEGPNIGLINSLALYARLNEYGFLETPYRKVENSKLTDQVDYLSAIEEGKYVVAQANATVDAEGNLTDELVSAREGSERETRMVTPDRVQYIDVAPSQIVSAAASLVPFLEHDDANRALMGANMQRQAVPCLRPDKPLVGTGIERTVAVDSGTAVQAMRGGVVDYVDAMRIVIRVNDDEAVAGEVGVDIYNLIKYTRSNQNTNINQRPMVKVGDIVARGDVVADGASTDLGELALGQNMLVAFMPWNGYNFEDSILISERVVAEDRYTSIHIEELSVVARDTKLGPEEITRDISNLAEAQLARLDESGITYIGAEVEAGDVLVGKVTPKGETQLTPEEKLLRAIFGEKASDVKDTSLRVPSGMSGIVIDVQVFTREGVTRDKRAQSIIDDELKRYRLDLNDQLRIVEGDAFQRLERLLIDKTVNGGPKKLAKGAKLTKEYLAEIDKYHWFDIRPADEEVAAQLEAVKEAIEQKRHEFDLAFEEKRKKLTQGDELPPGVIKMVKVYLAVKRRLQPGDKMAGRHGNKGVVSKIVPIEDMPYMADGTPADIVLNPLGVPSRMNVGQILETHLGWAARGLGQRIGDMLKASAKAQELRPLLAQIYNESGKAEDLDSLSDAEVLELATNLKKGVPFATPVFDGAHEDEIRRMLDLAYPDDIAKEKGLTASKQQVTLHDGRTGEAFERPVTLGVMHMLKLHHLVDDKMHARSTGPYSLVTQQPLGGKAQFGGQRFGEMEVWALEAYGASYVLQEMLTVKSDDVNGRTKVYENIVKGEHSIDAGMPESFNVLVKEIRSLGIDIDLDRY.

The protein belongs to the RNA polymerase beta chain family. The RNAP catalytic core consists of 2 alpha, 1 beta, 1 beta' and 1 omega subunit. When a sigma factor is associated with the core the holoenzyme is formed, which can initiate transcription.

The enzyme catalyses RNA(n) + a ribonucleoside 5'-triphosphate = RNA(n+1) + diphosphate. Functionally, DNA-dependent RNA polymerase catalyzes the transcription of DNA into RNA using the four ribonucleoside triphosphates as substrates. The protein is DNA-directed RNA polymerase subunit beta of Cupriavidus pinatubonensis (strain JMP 134 / LMG 1197) (Cupriavidus necator (strain JMP 134)).